Here is a 637-residue protein sequence, read N- to C-terminus: Chaperone protein HtpG (637 aa).

Positions 1 to 345 (MSQQETHGFQ…SNDLPLNVSR (345 aa)) are a; substrate-binding. The segment at 346 to 562 (EILQDNHITK…EGEMSTQMIK (217 aa)) is b. The segment at 563 to 637 (LMQAAGQPVP…MNQMLLANMK (75 aa)) is c.

It belongs to the heat shock protein 90 family. In terms of assembly, homodimer.

The protein localises to the cytoplasm. In terms of biological role, molecular chaperone. Has ATPase activity. The protein is Chaperone protein HtpG of Shewanella sp. (strain W3-18-1).